The sequence spans 405 residues: Deoxyguanosinetriphosphate triphosphohydrolase-like protein (405 aa).

The HD domain maps to 75-219 (RLTHTIEVAQ…AAIADDIAYN (145 aa)).

The protein belongs to the dGTPase family. Type 2 subfamily.

In Rhizobium etli (strain ATCC 51251 / DSM 11541 / JCM 21823 / NBRC 15573 / CFN 42), this protein is Deoxyguanosinetriphosphate triphosphohydrolase-like protein.